The following is a 194-amino-acid chain: Probable GTP-binding protein EngB (194 aa).

The EngB-type G domain occupies 22 to 194; it reads GKPEIALVGR…EVWHWIEQHI (173 aa). GTP is bound by residues 30 to 37, 57 to 61, 75 to 78, 142 to 145, and 175 to 177; these read GRSNVGKS, GKTQT, DVPG, TKSD, and FSS. Residues Ser37 and Thr59 each coordinate Mg(2+).

Belongs to the TRAFAC class TrmE-Era-EngA-EngB-Septin-like GTPase superfamily. EngB GTPase family. Mg(2+) is required as a cofactor.

In terms of biological role, necessary for normal cell division and for the maintenance of normal septation. This Leuconostoc mesenteroides subsp. mesenteroides (strain ATCC 8293 / DSM 20343 / BCRC 11652 / CCM 1803 / JCM 6124 / NCDO 523 / NBRC 100496 / NCIMB 8023 / NCTC 12954 / NRRL B-1118 / 37Y) protein is Probable GTP-binding protein EngB.